The sequence spans 733 residues: MVRYMVTSALPYANGPIHAGHLAGAYLPADIFVRYLRLKGEEVIFISGTDEHGTPITFRALKEGKSPREIVDYYHEHIKTTFERAKISFDYFGRTELPVHYRISQDFFLKALENDHLIKKVSKQAYCEHDKMFLPDRYVIGTCPYCGAENQRGDQCEVCGHPLTPEELINPRCNICGNPITFRDSAHYYIKMQDFAEKLKEWVQSQEHWKPNVKNTVLGWIEEGLEERAITRDLNWGIPVPLDDEDVKGKVLYVWFEAPIGYISITVEHLKREGKENEWKKFWLNLDGGTKVIHFIGKDNIPFHAIFWPAFLMAYGKYKEEETEAEWLLPYDIPANEYLNLEGKKFSTSRNWAIWVHEFLDAFPADYLRYYLTAIMPETRDSDFSFADFKTKINEELVNNLGNFVHRALTFVNRYFDGVVPERGELDDLDRQAFEEIEKALKETGELISTYRFKDALRRVMELAIFGNRYFDYQKPWKTAKENRERTATTVNVSLQIVKVLGVLLEPFLPDASEKIWHLLNLEETKRWEFIEIPAGHRVRRAEILFRKVTDEDIIFFIVNYIARGNPESARLLLDKYYRTDDVVKVALERFGEKRKDEAMAILKSIYGERLEKKAKKEKKKEGGKVEYVKFEDFMKLDLRVGKIVDVQDHPNADKLYVVKVDLGNEVRQLVAGLKKYYSKDDLLNRYVVIIANLEPKKLRGIESQGMLLAADDGENVALLMPDKEVKLGARIR.

The 'HIGH' region motif lies at 11–21 (PYANGPIHAGH). 4 residues coordinate Zn(2+): Cys-143, Cys-146, Cys-156, and Cys-159. The short motif at 345-349 (KFSTS) is the 'KMSKS' region element. Thr-348 contacts ATP. Residues 633 to 733 (DFMKLDLRVG…KEVKLGARIR (101 aa)) form the tRNA-binding domain.

It belongs to the class-I aminoacyl-tRNA synthetase family. MetG type 1 subfamily. Homodimer. Zn(2+) serves as cofactor.

It localises to the cytoplasm. The catalysed reaction is tRNA(Met) + L-methionine + ATP = L-methionyl-tRNA(Met) + AMP + diphosphate. In terms of biological role, is required not only for elongation of protein synthesis but also for the initiation of all mRNA translation through initiator tRNA(fMet) aminoacylation. The chain is Methionine--tRNA ligase from Thermococcus onnurineus (strain NA1).